Consider the following 749-residue polypeptide: Myosin-binding protein 2 (749 aa).

A helical membrane pass occupies residues 17 to 37 (ITLILVYAFLEWSLIFFILLN). The disordered stretch occupies residues 164-184 (NLNDSQEETEEKKVPQSHEKL). Residues 173 to 184 (EEKKVPQSHEKL) are compositionally biased toward basic and acidic residues. The region spanning 411–509 (LTVDKLKFEL…ELEKELEVYR (99 aa)) is the GTD-binding domain. Residues 589 to 621 (ERLSILGRLKFLEEKLTDLNNEEDDEEEAKTFE) are a coiled coil. The segment at 608-640 (NNEEDDEEEAKTFESNGSINGNEHIHGKETNGK) is disordered. Residues 630-639 (EHIHGKETNG) are compositionally biased toward basic and acidic residues. Residues 676–710 (DSEKGENVTIEEEVDELYERLEALEADREFLRHCV) adopt a coiled-coil conformation.

Interacts with myosin XI-K and XI-1. As to expression, expressed in leaf epidermal cells, roots and root hairs.

The protein localises to the endomembrane system. Membrane-anchored myosin receptors that define a distinct, plant-specific transport vesicle compartment. The chain is Myosin-binding protein 2 from Arabidopsis thaliana (Mouse-ear cress).